A 1235-amino-acid chain; its full sequence is Cullin-associated NEDD8-dissociated protein 2 (1235 aa).

Residue Ser-2 is modified to N-acetylserine. 26 HEAT repeats span residues 2–39 (STGA…KDSI), 44–81 (DSER…KVKE), 83–119 (QVEN…ELPP), 129–167 (NVCR…RLGA), 171–208 (TFHA…ACST), 210–246 (LFVE…SVGR), 254–291 (AHLD…KCPK), 326–367 (TEDS…SRPD), 371–408 (DFHC…HTRP), 431–468 (AQVP…VLPG), 516–553 (PHLP…TLWP), 564–603 (PYVG…HLGD), 607–644 (DDLE…LRLD), 647–684 (PILA…SQGL), 689–726 (PAVR…TQPS), 730–769 (EVSG…TRPP), 771–812 (VEYS…ALSA), 856–893 (GPQR…GNLP), 895–930 (FLPF…DNLK), 932–965 (YVED…LVFV), 966–1002 (NPPY…DQPH), 1006–1043 (PLLK…NKPS), 1047–1083 (DLLD…DDGL), 1104–1140 (LDMC…LCPA), 1156–1193 (TCTA…NPEV), and 1203–1235 (SAQI…MELS). The segment at 314–345 (YDHDSDDEEQMETEDSEFSEQESEDEYSDDDD) is disordered. Acidic residues predominate over residues 317 to 345 (DSDDEEQMETEDSEFSEQESEDEYSDDDD).

It belongs to the CAND family. In terms of assembly, binds TBP, CNOT3 and UBE3C. Ubiquitinated and targeted for proteasomal degradation. In terms of tissue distribution, highly expressed in embryonic limb buds.

The protein resides in the nucleus. In terms of biological role, probable assembly factor of SCF (SKP1-CUL1-F-box protein) E3 ubiquitin ligase complexes that promotes the exchange of the substrate-recognition F-box subunit in SCF complexes, thereby playing a key role in the cellular repertoire of SCF complexes. The polypeptide is Cullin-associated NEDD8-dissociated protein 2 (Cand2) (Mus musculus (Mouse)).